The following is a 184-amino-acid chain: ATP synthase subunit delta (184 aa).

Belongs to the ATPase delta chain family. As to quaternary structure, F-type ATPases have 2 components, F(1) - the catalytic core - and F(0) - the membrane proton channel. F(1) has five subunits: alpha(3), beta(3), gamma(1), delta(1), epsilon(1). CF(0) has four main subunits: a(1), b(1), b'(1) and c(10-14). The alpha and beta chains form an alternating ring which encloses part of the gamma chain. F(1) is attached to F(0) by a central stalk formed by the gamma and epsilon chains, while a peripheral stalk is formed by the delta, b and b' chains.

It is found in the cell inner membrane. In terms of biological role, f(1)F(0) ATP synthase produces ATP from ADP in the presence of a proton or sodium gradient. F-type ATPases consist of two structural domains, F(1) containing the extramembraneous catalytic core and F(0) containing the membrane proton channel, linked together by a central stalk and a peripheral stalk. During catalysis, ATP synthesis in the catalytic domain of F(1) is coupled via a rotary mechanism of the central stalk subunits to proton translocation. This protein is part of the stalk that links CF(0) to CF(1). It either transmits conformational changes from CF(0) to CF(1) or is implicated in proton conduction. The chain is ATP synthase subunit delta from Erythrobacter litoralis (strain HTCC2594).